The chain runs to 41 residues: Large ribosomal subunit protein bL36 (41 aa).

It belongs to the bacterial ribosomal protein bL36 family.

In Azorhizobium caulinodans (strain ATCC 43989 / DSM 5975 / JCM 20966 / LMG 6465 / NBRC 14845 / NCIMB 13405 / ORS 571), this protein is Large ribosomal subunit protein bL36.